Consider the following 42-residue polypeptide: Photosystem I reaction center subunit IX (42 aa).

Residues 7-27 (YLSTAPVLAAIWFAILAGLLI) traverse the membrane as a helical segment.

Belongs to the PsaJ family.

It is found in the plastid. The protein resides in the chloroplast thylakoid membrane. In terms of biological role, may help in the organization of the PsaE and PsaF subunits. The sequence is that of Photosystem I reaction center subunit IX from Zygnema circumcarinatum (Green alga).